The chain runs to 400 residues: MSNSAAGRLNQTSHILNESIKNDDISLRRSQPSTTSLQALEHPFKVTVIGSGNWGTTIAKVVAENTALNPHLFVSRVDMWVFEEKIDGKNLTEIINEQHENVKYLPDIKLPENLVANPNLIDSVKGADILIFNIPHQFLPRIVSNLKNHVGPHVRAISCLKGFEVGKKGVQLLSSYVTDELGIQCGALSGANLAPEVAKEHWSETTVAYHIPKDFRGEGKDVDHKLLKALFHRPYFHVNVIEDVAGISIAGALKNVVALGCGFVEGLGWGNNAAAAIQRVGLGEIIKFGQMFFPESRVQTYYQESAGVADLITTCSGGRNVRVAKHMAKTGKSALDAEKELLNGQSAQGIITCKEVHEWLETCEMTHEFPLFEAVYQIVYNNVPMKNLPDMIEELECIAD.

NAD(+) contacts are provided by residues 50-55 (GSGNWG), Phe-138, Lys-161, and Ala-194. Lys-161 contributes to the substrate binding site. The active-site Proton acceptor is the Lys-254. Residues Arg-319 and Gln-348 each coordinate NAD(+). Residue 319–320 (RN) participates in substrate binding.

This sequence belongs to the NAD-dependent glycerol-3-phosphate dehydrogenase family.

It catalyses the reaction sn-glycerol 3-phosphate + NAD(+) = dihydroxyacetone phosphate + NADH + H(+). The protein is Glycerol-3-phosphate dehydrogenase [NAD(+)] 1 (GPD1) of Candida glabrata (strain ATCC 2001 / BCRC 20586 / JCM 3761 / NBRC 0622 / NRRL Y-65 / CBS 138) (Yeast).